The chain runs to 412 residues: Serine hydroxymethyltransferase (412 aa).

Residues L117 and 121 to 123 (GHL) contribute to the (6S)-5,6,7,8-tetrahydrofolate site. K226 is subject to N6-(pyridoxal phosphate)lysine. 349 to 351 (SPF) lines the (6S)-5,6,7,8-tetrahydrofolate pocket.

The protein belongs to the SHMT family. As to quaternary structure, homodimer. It depends on pyridoxal 5'-phosphate as a cofactor.

It is found in the cytoplasm. The enzyme catalyses (6R)-5,10-methylene-5,6,7,8-tetrahydrofolate + glycine + H2O = (6S)-5,6,7,8-tetrahydrofolate + L-serine. It functions in the pathway one-carbon metabolism; tetrahydrofolate interconversion. The protein operates within amino-acid biosynthesis; glycine biosynthesis; glycine from L-serine: step 1/1. Functionally, catalyzes the reversible interconversion of serine and glycine with tetrahydrofolate (THF) serving as the one-carbon carrier. This reaction serves as the major source of one-carbon groups required for the biosynthesis of purines, thymidylate, methionine, and other important biomolecules. Also exhibits THF-independent aldolase activity toward beta-hydroxyamino acids, producing glycine and aldehydes, via a retro-aldol mechanism. The sequence is that of Serine hydroxymethyltransferase from Nitratidesulfovibrio vulgaris (strain ATCC 29579 / DSM 644 / CCUG 34227 / NCIMB 8303 / VKM B-1760 / Hildenborough) (Desulfovibrio vulgaris).